The chain runs to 412 residues: rRNA methyltransferase 1, mitochondrial (412 aa).

The N-terminal 20 residues, M1 to H20, are a transit peptide targeting the mitochondrion.

The protein belongs to the class IV-like SAM-binding methyltransferase superfamily. RNA methyltransferase TrmH family.

The protein localises to the mitochondrion. It catalyses the reaction guanosine(2270) in 21S rRNA + S-adenosyl-L-methionine = 2'-O-methylguanosine(2270) in 21S rRNA + S-adenosyl-L-homocysteine + H(+). Its function is as follows. S-adenosyl-L-methionine-dependent 2'-O-ribose methyltransferase that catalyzes the formation of 2'-O-methylguanosine at position 2270 (Gm2270) in the 21S mitochondrial large subunit ribosomal RNA (mtLSU rRNA), a universally conserved modification in the peptidyl transferase domain of the mtLSU rRNA. This modification seems to be important for the normal accumulation of the mitochondrial large ribosomal subunit. The sequence is that of rRNA methyltransferase 1, mitochondrial from Saccharomyces cerevisiae (strain ATCC 204508 / S288c) (Baker's yeast).